The sequence spans 173 residues: NADH-ubiquinone oxidoreductase chain 6 (173 aa).

A run of 5 helical transmembrane segments spans residues 1-21 (MVYFMFIMLVGLILGLMAVAS), 25-45 (PYFAALGLVVAAGVGCGLLVG), 53-73 (LVLFLIYLGGMLVVFAYTAAL), 82-102 (WGDWSVLLYVSVYLLGIFFVG), and 141-161 (GIMLVLGGWVLLLTLFVILEL).

Belongs to the complex I subunit 6 family.

It is found in the mitochondrion membrane. It catalyses the reaction a ubiquinone + NADH + 5 H(+)(in) = a ubiquinol + NAD(+) + 4 H(+)(out). Functionally, core subunit of the mitochondrial membrane respiratory chain NADH dehydrogenase (Complex I) that is believed to belong to the minimal assembly required for catalysis. Complex I functions in the transfer of electrons from NADH to the respiratory chain. The immediate electron acceptor for the enzyme is believed to be ubiquinone. This is NADH-ubiquinone oxidoreductase chain 6 (MT-ND6) from Squalus acanthias (Spiny dogfish).